The sequence spans 318 residues: Aspartate carbamoyltransferase catalytic subunit (318 aa).

Residues Arg-59 and Thr-60 each coordinate carbamoyl phosphate. Lys-87 contributes to the L-aspartate binding site. Carbamoyl phosphate-binding residues include Arg-109, His-137, and Gln-140. Residues Arg-170 and Arg-224 each contribute to the L-aspartate site. The carbamoyl phosphate site is built by Gly-265 and Pro-266.

The protein belongs to the aspartate/ornithine carbamoyltransferase superfamily. ATCase family. Heterododecamer (2C3:3R2) of six catalytic PyrB chains organized as two trimers (C3), and six regulatory PyrI chains organized as three dimers (R2).

It catalyses the reaction carbamoyl phosphate + L-aspartate = N-carbamoyl-L-aspartate + phosphate + H(+). It functions in the pathway pyrimidine metabolism; UMP biosynthesis via de novo pathway; (S)-dihydroorotate from bicarbonate: step 2/3. Functionally, catalyzes the condensation of carbamoyl phosphate and aspartate to form carbamoyl aspartate and inorganic phosphate, the committed step in the de novo pyrimidine nucleotide biosynthesis pathway. The polypeptide is Aspartate carbamoyltransferase catalytic subunit (Rhizobium johnstonii (strain DSM 114642 / LMG 32736 / 3841) (Rhizobium leguminosarum bv. viciae)).